Consider the following 223-residue polypeptide: Adenylate kinase 4, mitochondrial (223 aa).

Residue 15-20 (GSGKGT) coordinates a ribonucleoside 5'-triphosphate. The segment at 35-64 (SSGHLLRENLKTNTEVGDVAKQYLEKGLLV) is NMP. Positions 36 and 41 each coordinate AMP. Lys-60 bears the N6-succinyllysine mark. AMP-binding positions include 62–64 (LLV), 89–92 (GFPR), and Gln-96. Residues 125-162 (RRWIHPSSGRVYNLDFNPPQVLGVDDITGEPLVQQEDD) form an LID region. Residues Arg-126 and 135–136 (VY) contribute to the a ribonucleoside 5'-triphosphate site. An AMP-binding site is contributed by Arg-170. N6-acetyllysine is present on Lys-175. N6-acetyllysine; alternate occurs at positions 179 and 186. 2 positions are modified to N6-succinyllysine; alternate: Lys-179 and Lys-186. Thr-199 is an a ribonucleoside 5'-triphosphate binding site.

Belongs to the adenylate kinase family. AK3 subfamily. Monomer. Interacts with SLC25A5/ANT2. In terms of tissue distribution, expressed in the pyramidal cells in the hippocampus.

The protein localises to the mitochondrion matrix. It catalyses the reaction a ribonucleoside 5'-phosphate + ATP = a ribonucleoside 5'-diphosphate + ADP. The enzyme catalyses AMP + ATP = 2 ADP. It carries out the reaction GTP + AMP = GDP + ADP. The catalysed reaction is CMP + ATP = CDP + ADP. It catalyses the reaction GTP + CMP = CDP + GDP. The enzyme catalyses dAMP + ATP = dADP + ADP. It carries out the reaction dCMP + ATP = dCDP + ADP. The catalysed reaction is a 2'-deoxyribonucleoside 5'-diphosphate + ATP = a 2'-deoxyribonucleoside 5'-triphosphate + ADP. It catalyses the reaction a ribonucleoside 5'-diphosphate + ATP = a ribonucleoside 5'-triphosphate + ADP. The enzyme catalyses GDP + ATP = GTP + ADP. It carries out the reaction CDP + GTP = CTP + GDP. The catalysed reaction is CDP + ATP = CTP + ADP. It catalyses the reaction UDP + ATP = UTP + ADP. The enzyme catalyses GTP + UDP = UTP + GDP. It carries out the reaction dADP + GTP = dATP + GDP. The catalysed reaction is dCDP + GTP = dCTP + GDP. It catalyses the reaction dCDP + ATP = dCTP + ADP. The enzyme catalyses dGDP + ATP = dGTP + ADP. It carries out the reaction dTDP + GTP = dTTP + GDP. The catalysed reaction is dTDP + ATP = dTTP + ADP. Its function is as follows. Broad-specificity mitochondrial nucleoside phosphate kinase involved in cellular nucleotide homeostasis by catalyzing nucleoside-phosphate interconversions. Similar to other adenylate kinases, preferentially catalyzes the phosphorylation of the nucleoside monophosphate AMP with ATP as phosphate donor to produce ADP. Phosphorylates only AMP when using GTP as phosphate donor. In vitro, can also catalyze the phosphorylation of CMP, dAMP and dCMP and use GTP as an alternate phosphate donor. Moreover, exhibits a diphosphate kinase activity, producing ATP, CTP, GTP, UTP, TTP, dATP, dCTP and dGTP from the corresponding diphosphate substrates with either ATP or GTP as phosphate donors. Plays a role in controlling cellular ATP levels by regulating phosphorylation and activation of the energy sensor protein kinase AMPK. Plays a protective role in the cellular response to oxidative stress. The sequence is that of Adenylate kinase 4, mitochondrial from Rattus norvegicus (Rat).